Here is a 241-residue protein sequence, read N- to C-terminus: Uridylate kinase (241 aa).

ATP is bound at residue 12–15 (KLSG). Glycine 54 is a UMP binding site. Residues glycine 55 and arginine 59 each coordinate ATP. UMP is bound by residues aspartate 74 and 135 to 142 (TGNPFFTT). Residues threonine 162, tyrosine 168, and aspartate 171 each coordinate ATP.

The protein belongs to the UMP kinase family. In terms of assembly, homohexamer.

The protein localises to the cytoplasm. It catalyses the reaction UMP + ATP = UDP + ADP. Its pathway is pyrimidine metabolism; CTP biosynthesis via de novo pathway; UDP from UMP (UMPK route): step 1/1. Its activity is regulated as follows. Inhibited by UTP. Catalyzes the reversible phosphorylation of UMP to UDP. The chain is Uridylate kinase from Magnetococcus marinus (strain ATCC BAA-1437 / JCM 17883 / MC-1).